The sequence spans 301 residues: Glycine cleavage system transcriptional activator homolog (301 aa).

The 58-residue stretch at 10-67 (PPLNSLKSFESAARYLSFTKAADELCVTQAAVSHQIKLLEXFLGIDLFKRKNRSLELT) folds into the HTH lysR-type domain. A DNA-binding region (H-T-H motif) is located at residues 27–46 (FTKAADELCVTQAAVSHQIK).

This sequence belongs to the LysR transcriptional regulatory family.

It localises to the cytoplasm. Its function is as follows. Not known, the gcv operon regulated by the E.coli homolog does not exist in H.influenzae, so it probably acts as a transcriptional regulator on some other operon. In Haemophilus influenzae (strain ATCC 51907 / DSM 11121 / KW20 / Rd), this protein is Glycine cleavage system transcriptional activator homolog (gcvA).